Here is a 233-residue protein sequence, read N- to C-terminus: ATP synthase subunit C lysine N-methyltransferase (233 aa).

Met1 carries the N-acetylmethionine modification. The chain crosses the membrane as a helical span at residues 38–58 (FLLTGLVGGTLVAVYAVATPF). The required for mitochondrial location stretch occupies residues 56–90 (TPFVTPALRKVCLPFVPATTKQIENVVKMLRCRRG).

Belongs to the ANT/ATPSC lysine N-methyltransferase family. As to expression, ubiquitously expressed.

The protein localises to the mitochondrion membrane. It carries out the reaction L-lysyl-[protein] + 3 S-adenosyl-L-methionine = N(6),N(6),N(6)-trimethyl-L-lysyl-[protein] + 3 S-adenosyl-L-homocysteine + 3 H(+). Mitochondrial protein-lysine N-methyltransferase that trimethylates ATP synthase subunit C, ATP5MC1 and ATP5MC2. Trimethylation is required for proper incorporation of the C subunit into the ATP synthase complex and mitochondrial respiration. Promotes chronic pain. Involved in persistent inflammatory and neuropathic pain: methyltransferase activity in the mitochondria of sensory neurons promotes chronic pain via a pathway that depends on the production of reactive oxygen species (ROS) and on the engagement of spinal cord microglia. In Homo sapiens (Human), this protein is ATP synthase subunit C lysine N-methyltransferase.